The chain runs to 492 residues: Transcription factor IIIB 60 kDa subunit (492 aa).

The segment at 1 to 30 adopts a TFIIB-type zinc-finger fold; it reads MGCPNCGSTTFESDTASGNTYCTQCGVVVE. Zn(2+) contacts are provided by C3, C6, C22, and C25. Residues 440 to 468 form a disordered region; sequence QPRKRRRYRPRDSTSDGIADTAAESAKEM.

It belongs to the TFIIB family. As to quaternary structure, TFIIIB comprises the TATA-binding protein (TBP), the B-related factor (BRF) and a third subunit (Potential). Interacts with maf1.

Its subcellular location is the nucleus. In terms of biological role, general activator of RNA polymerase III transcription. The protein is Transcription factor IIIB 60 kDa subunit (brf1) of Schizosaccharomyces pombe (strain 972 / ATCC 24843) (Fission yeast).